The chain runs to 159 residues: Xanthine dehydrogenase iron-sulfur-binding subunit (159 aa).

Residues 7 to 82 (ITIECTINGM…GKEIRTLEGE (76 aa)) enclose the 2Fe-2S ferredoxin-type domain. [2Fe-2S] cluster is bound by residues Cys-44, Cys-49, and Cys-52.

Heterotrimer of XdhA, XdhB and XdhC. Requires [2Fe-2S] cluster as cofactor.

It functions in the pathway purine metabolism; hypoxanthine degradation; urate from hypoxanthine: step 1/2. Its function is as follows. Iron-sulfur subunit of the xanthine dehydrogenase complex. This is Xanthine dehydrogenase iron-sulfur-binding subunit (xdhC) from Escherichia coli O157:H7.